We begin with the raw amino-acid sequence, 2615 residues long: Probable serine/threonine-protein kinase roco7 (2615 aa).

Residues 1 to 13 (MDGYSSLSSSGNS) show a composition bias toward low complexity. 4 disordered regions span residues 1-35 (MDGY…NYNQ), 275-297 (STPT…NSNN), 533-623 (QNIN…GGLN), and 946-998 (SSSS…ISEQ). Low complexity-rich tracts occupy residues 533-560 (QNIN…SSRS), 567-614 (NSST…NNNN), and 946-996 (SSSS…SNIS). The COR domain maps to 1441-1631 (SVKEAYARNK…LCIWQNGMVL (191 aa)). Positions 1775-2042 (LKFGPQLGSG…ERLSTMQKTF (268 aa)) constitute a Protein kinase domain. ATP contacts are provided by residues 1781 to 1789 (LGSGSYANV) and Lys-1802. The Proton acceptor role is filled by Asp-1899. Disordered regions lie at residues 2061-2158 (QINQ…SHSG) and 2176-2209 (GIGS…YESG). 2 stretches are compositionally biased toward low complexity: residues 2073 to 2158 (SQAA…SHSG) and 2182 to 2209 (NQHQ…YESG). WD repeat units follow at residues 2491-2527 (GIIK…LVWD) and 2533-2574 (RMVQ…TTYS).

This sequence belongs to the protein kinase superfamily. TKL Ser/Thr protein kinase family. ROCO subfamily.

It carries out the reaction L-seryl-[protein] + ATP = O-phospho-L-seryl-[protein] + ADP + H(+). The enzyme catalyses L-threonyl-[protein] + ATP = O-phospho-L-threonyl-[protein] + ADP + H(+). This chain is Probable serine/threonine-protein kinase roco7 (roco7), found in Dictyostelium discoideum (Social amoeba).